Consider the following 376-residue polypeptide: Chaperone protein DnaJ (376 aa).

The J domain occupies 5-72 (DFYEVLGVPK…QKRAAYDQYG (68 aa)). Residues 136 to 214 (GKEAQIRIPS…CHGQGRVKKQ (79 aa)) form a CR-type zinc finger. Cys149, Cys152, Cys166, Cys169, Cys188, Cys191, Cys202, and Cys205 together coordinate Zn(2+). 4 CXXCXGXG motif repeats span residues 149-156 (CETCHGSG), 166-173 (CGTCQGSG), 188-195 (CPHCRGTG), and 202-209 (CTACHGQG). Disordered stretches follow at residues 227–246 (DGMR…GGPP) and 352–376 (SLKK…SFFS). Positions 237 to 246 (GEPGTNGGPP) are enriched in gly residues. The span at 367 to 376 (WTDRLKSFFS) shows a compositional bias: basic and acidic residues.

The protein belongs to the DnaJ family. In terms of assembly, homodimer. The cofactor is Zn(2+).

The protein resides in the cytoplasm. Functionally, participates actively in the response to hyperosmotic and heat shock by preventing the aggregation of stress-denatured proteins and by disaggregating proteins, also in an autonomous, DnaK-independent fashion. Unfolded proteins bind initially to DnaJ; upon interaction with the DnaJ-bound protein, DnaK hydrolyzes its bound ATP, resulting in the formation of a stable complex. GrpE releases ADP from DnaK; ATP binding to DnaK triggers the release of the substrate protein, thus completing the reaction cycle. Several rounds of ATP-dependent interactions between DnaJ, DnaK and GrpE are required for fully efficient folding. Also involved, together with DnaK and GrpE, in the DNA replication of plasmids through activation of initiation proteins. The polypeptide is Chaperone protein DnaJ (Acidovorax sp. (strain JS42)).